Reading from the N-terminus, the 893-residue chain is Protein FAM186B (893 aa).

5 disordered regions span residues 177-207 (GWQGRSPQTSPSHPQPLSPEQMLQDQHTMNT), 327-376 (QAED…PSPM), 537-557 (LEKEQESPRREPEQLGEDVER), 574-611 (LSLVPAPSRTQSAHQSRRPHLPMSPSTQQPALGKQRPM), and 806-827 (KPKKCKLPAASPRHIRPSGPTY). 2 stretches are compositionally biased toward polar residues: residues 179–188 (QGRSPQTSPS) and 197–207 (QMLQDQHTMNT). Residues 303–331 (RYHDLLLMKQALEFQLKKAQNATGQAEDL) are a coiled coil. The segment covering 342–353 (SERETLPRKETV) has biased composition (basic and acidic residues).

It belongs to the FAM186 family.

The protein is Protein FAM186B (FAM186B) of Homo sapiens (Human).